The sequence spans 365 residues: F-box protein At1g48060 (365 aa).

The segment at 1-20 (MKPQEEEEKNENMARKRSKS) is disordered. An F-box domain is found at 20-69 (SSSSLSIPLDIATDIFLRLPAKSVVRFSCVAKHWSSITTAPYFTNSFETR).

This Arabidopsis thaliana (Mouse-ear cress) protein is F-box protein At1g48060.